The primary structure comprises 851 residues: MRVKEKYQHLWRWGWRWGTMLLGMLMICSATEKLWVTVYFGVPVWKEATTTLFCASDAKAYDTEVHNVWATHACVPTDPNPQEVVLVNVTENFNMWKNDMVEQMHEDIISLWDQSLKPCVKLTPLCVSLKCTDLKNDTNTNSSSGRMIMEKGEIKNCSFNISTSKRGKVQKEYAFFYKLDIIPIDNDTTSYTLTSCNTSVITQACPKVSFEPIPIHYCAPAGFAILKCNNKTFNGTGPCTNVSTVQCTHGIRPVVSTQLLLNGSLAEEEVVIRSVNFTDNAKTIIVQLDTSVEINCTRPNNNTRKKIRIQRGPGRAFVTIGKIGNMRQAHCNISRAKWNATLKQIDSKLREQFGNNKTIIFKQSSGGDPEIVTHSFNCGGEFFYCNSTQLFNSTWSTKGSNNTEGSDTITLPCRIKQIINMWQEVGKAMYAPPISGQIRCSSNITGLLLTRDGGNSNNESEIFRPGGGDMRDNWRSELYKYKVVKIEPLGVAPTKAKRRVVQREKRAVGIGALFLGFLGAAGSTMGAASMTLTVQARQLLSGIVQQQNNLLRAIEGQQHLLQLTVWGIKQLQARILAVERYLKDQQLLGIWGCSGKLICTTAVPWNASWSNKSLEQIWNNMTWMEWDREINNYTSLIHSLIEESQNQQEKNEQELLELDKWASLWNWFNITNWLWYIKLFIMIVGGLVGLRIVFAVLSIVNRVRQGYSPLSFQTHLPNPRGPDRPEGIEEEGGERDRDRSIRLVNGSLALIWDDLRSLCLFSYHRLRDLLLIVTRIVELLGRRGWEALKYWWNLLQYWSQELKNSAVNLLNATAIAVAEGTDRVIELVQAAYRAIRHIPRRIRQGLERILL.

Residues 1–32 (MRVKEKYQHLWRWGWRWGTMLLGMLMICSATE) form the signal peptide. The Extracellular portion of the chain corresponds to 33-679 (KLWVTVYFGV…ITNWLWYIKL (647 aa)). Cysteines 54 and 74 form a disulfide. Residues Asn88, Asn136, Asn141, Asn156, Asn160, Asn186, Asn197, Asn230, Asn234, Asn241, Asn262, Asn276, Asn295, Asn301, Asn332, Asn339, and Asn356 are each glycosylated (N-linked (GlcNAc...) asparagine; by host). 5 cysteine pairs are disulfide-bonded: Cys119–Cys205, Cys126–Cys196, Cys131–Cys157, Cys218–Cys247, and Cys228–Cys239. Positions 131–156 (CTDLKNDTNTNSSSGRMIMEKGEIKN) are V1. Residues 157–196 (CSFNISTSKRGKVQKEYAFFYKLDIIPIDNDTTSYTLTSC) are V2. The V3 stretch occupies residues 296-330 (CTRPNNNTRKKIRIQRGPGRAFVTIGKIGNMRQAH). A disulfide bridge connects residues Cys296 and Cys331. The interval 364 to 374 (SSGGDPEIVTH) is CD4-binding loop. 2 disulfide bridges follow: Cys378–Cys440 and Cys385–Cys413. The segment at 385-413 (CNSTQLFNSTWSTKGSNNTEGSDTITLPC) is V4. N-linked (GlcNAc...) asparagine; by host glycosylation is found at Asn386, Asn392, Asn401, Asn443, and Asn458. V5 regions lie at residues 456–466 (SNNESEIFRPG) and 458–466 (NESEIFRPG). The tract at residues 507-527 (AVGIGALFLGFLGAAGSTMGA) is fusion peptide. Residues 569 to 587 (KQLQARILAVERYLKDQQL) form an immunosuppression region. Cysteines 593 and 599 form a disulfide. Residues Asn606, Asn611, Asn620, Asn632, and Asn669 are each glycosylated (N-linked (GlcNAc...) asparagine; by host). A coiled-coil region spans residues 628–662 (REINNYTSLIHSLIEESQNQQEKNEQELLELDKWA). The segment at 657–678 (ELDKWASLWNWFNITNWLWYIK) is MPER; binding to GalCer. A helical transmembrane segment spans residues 680–700 (FIMIVGGLVGLRIVFAVLSIV). Residues 701–851 (NRVRQGYSPL…IRQGLERILL (151 aa)) lie on the Cytoplasmic side of the membrane. The short motif at 707–710 (YSPL) is the YXXL motif; contains endocytosis signal element. Positions 713 to 735 (QTHLPNPRGPDRPEGIEEEGGER) are disordered. Cys759 is lipidated: S-palmitoyl cysteine; by host. The Di-leucine internalization motif motif lies at 850–851 (LL).

It belongs to the HIV-1 env protein family. The mature envelope protein (Env) consists of a homotrimer of non-covalently associated gp120-gp41 heterodimers. The resulting complex protrudes from the virus surface as a spike. There seems to be as few as 10 spikes on the average virion. Interacts with host CD4, CCR5 and CXCR4. Gp120 also interacts with the C-type lectins CD209/DC-SIGN and CLEC4M/DC-SIGNR (collectively referred to as DC-SIGN(R)). Gp120 and gp41 interact with GalCer. Gp120 interacts with host ITGA4/ITGB7 complex; on CD4+ T-cells, this interaction results in rapid activation of integrin ITGAL/LFA-1, which facilitates efficient cell-to-cell spreading of HIV-1. Gp120 interacts with cell-associated heparan sulfate; this interaction increases virus infectivity on permissive cells and may be involved in infection of CD4- cells. In terms of assembly, the mature envelope protein (Env) consists of a homotrimer of non-covalently associated gp120-gp41 heterodimers. The resulting complex protrudes from the virus surface as a spike. There seems to be as few as 10 spikes on the average virion. Post-translationally, highly glycosylated by host. The high number of glycan on the protein is reffered to as 'glycan shield' because it contributes to hide protein sequence from adaptive immune system. In terms of processing, palmitoylation of the transmembrane protein and of Env polyprotein (prior to its proteolytic cleavage) is essential for their association with host cell membrane lipid rafts. Palmitoylation is therefore required for envelope trafficking to classical lipid rafts, but not for viral replication. Specific enzymatic cleavages in vivo yield mature proteins. Envelope glycoproteins are synthesized as an inactive precursor that is heavily N-glycosylated and processed likely by host cell furin in the Golgi to yield the mature SU and TM proteins. The cleavage site between SU and TM requires the minimal sequence [KR]-X-[KR]-R. About 2 of the 9 disulfide bonds of gp41 are reduced by P4HB/PDI, following binding to CD4 receptor.

The protein resides in the virion membrane. It localises to the host cell membrane. Its subcellular location is the host endosome membrane. Oligomerizes in the host endoplasmic reticulum into predominantly trimers. In a second time, gp160 transits in the host Golgi, where glycosylation is completed. The precursor is then proteolytically cleaved in the trans-Golgi and thereby activated by cellular furin or furin-like proteases to produce gp120 and gp41. Functionally, attaches the virus to the host lymphoid cell by binding to the primary receptor CD4. This interaction induces a structural rearrangement creating a high affinity binding site for a chemokine coreceptor like CXCR4 and/or CCR5. Acts as a ligand for CD209/DC-SIGN and CLEC4M/DC-SIGNR, which are respectively found on dendritic cells (DCs), and on endothelial cells of liver sinusoids and lymph node sinuses. These interactions allow capture of viral particles at mucosal surfaces by these cells and subsequent transmission to permissive cells. HIV subverts the migration properties of dendritic cells to gain access to CD4+ T-cells in lymph nodes. Virus transmission to permissive T-cells occurs either in trans (without DCs infection, through viral capture and transmission), or in cis (following DCs productive infection, through the usual CD4-gp120 interaction), thereby inducing a robust infection. In trans infection, bound virions remain infectious over days and it is proposed that they are not degraded, but protected in non-lysosomal acidic organelles within the DCs close to the cell membrane thus contributing to the viral infectious potential during DCs' migration from the periphery to the lymphoid tissues. On arrival at lymphoid tissues, intact virions recycle back to DCs' cell surface allowing virus transmission to CD4+ T-cells. Its function is as follows. Acts as a class I viral fusion protein. Under the current model, the protein has at least 3 conformational states: pre-fusion native state, pre-hairpin intermediate state, and post-fusion hairpin state. During fusion of viral and target intracellular membranes, the coiled coil regions (heptad repeats) assume a trimer-of-hairpins structure, positioning the fusion peptide in close proximity to the C-terminal region of the ectodomain. The formation of this structure appears to drive apposition and subsequent fusion of viral and target cell membranes. Complete fusion occurs in host cell endosomes and is dynamin-dependent, however some lipid transfer might occur at the plasma membrane. The virus undergoes clathrin-dependent internalization long before endosomal fusion, thus minimizing the surface exposure of conserved viral epitopes during fusion and reducing the efficacy of inhibitors targeting these epitopes. Membranes fusion leads to delivery of the nucleocapsid into the cytoplasm. The polypeptide is Envelope glycoprotein gp160 (Homo sapiens (Human)).